Reading from the N-terminus, the 327-residue chain is Toluene-4-monooxygenase system, hydroxylase component subunit beta (327 aa).

The protein belongs to the TmoE/XamoE family. The alkene monooxygenase multicomponent enzyme system is composed of an electron transfer component and a monooxygenase component interacting with the effector protein TmoD. The electron transfer component is composed of a ferredoxin reductase (TmoF) and a ferredoxin (TmoC), and the monooxygenase component is formed by a heterohexamer (dimer of heterotrimers) of two alpha subunits (TmoA), two beta subunits (TmoE) and two gamma subunits (TmoB).

It catalyses the reaction toluene + NADH + O2 + H(+) = 4-methylphenol + NAD(+) + H2O. The protein operates within xenobiotic degradation; toluene degradation. Its activity is regulated as follows. Inhibited by Zn(2+) and Cu(2+). Functionally, component of the toluene-4-monooxygenase multicomponent enzyme system which catalyzes the O2- and NADH-dependent hydroxylation of toluene to form p-cresol. Also able to convert benzene to phenol, catechol, and 1,2,3-trihydroxybenzene by successive hydroxylations. This Ectopseudomonas mendocina (Pseudomonas mendocina) protein is Toluene-4-monooxygenase system, hydroxylase component subunit beta.